The following is a 191-amino-acid chain: Signal peptidase complex catalytic subunit sec11 (191 aa).

Residues 1–18 (MLSALGGNLSNARQSIAQ) lie on the Cytoplasmic side of the membrane. Residues 19 to 39 (VLNFALVLSTAFMLWKGVSIA) traverse the membrane as a helical; Signal-anchor for type II membrane protein segment. At 40–191 (SNSSSPIVVV…MGLMVILQRE (152 aa)) the chain is on the lumenal side. A glycan (N-linked (GlcNAc...) asparagine) is linked at Asn-41. Residues Ser-53, His-92, and Asp-133 each act as charge relay system in the active site. Residues 177-188 (VLLGVMGLMVIL) form a C-terminal short (CTS) helix region.

It belongs to the peptidase S26B family. As to quaternary structure, component of the signal peptidase complex (SPC) composed of a catalytic subunit SEC11 and three accessory subunits SPC1, SPC2 and SPC3. The complex induces a local thinning of the ER membrane which is used to measure the length of the signal peptide (SP) h-region of protein substrates. This ensures the selectivity of the complex towards h-regions shorter than 18-20 amino acids. SPC associates with the translocon complex.

The protein localises to the endoplasmic reticulum membrane. The catalysed reaction is Cleavage of hydrophobic, N-terminal signal or leader sequences from secreted and periplasmic proteins.. Catalytic component of the signal peptidase complex (SPC) which catalyzes the cleavage of N-terminal signal sequences from nascent proteins as they are translocated into the lumen of the endoplasmic reticulum. Specifically cleaves N-terminal signal peptides that contain a hydrophobic alpha-helix (h-region) shorter than 18-20 amino acids. The sequence is that of Signal peptidase complex catalytic subunit sec11 (sec11) from Talaromyces marneffei (strain ATCC 18224 / CBS 334.59 / QM 7333) (Penicillium marneffei).